We begin with the raw amino-acid sequence, 78 residues long: Large ribosomal subunit protein bL31 (78 aa).

Residues Cys16, Cys18, Cys38, and Cys41 each contribute to the Zn(2+) site.

The protein belongs to the bacterial ribosomal protein bL31 family. Type A subfamily. In terms of assembly, part of the 50S ribosomal subunit. The cofactor is Zn(2+).

Its function is as follows. Binds the 23S rRNA. This is Large ribosomal subunit protein bL31 from Frankia casuarinae (strain DSM 45818 / CECT 9043 / HFP020203 / CcI3).